The primary structure comprises 387 residues: Ferrochelatase (387 aa).

The ferrochelatase stretch occupies residues 1–318; sequence MGRVGVLLLN…VFIDALAQMV (318 aa). Positions 196 and 277 each coordinate Fe cation. Residues 319–387 form a hlip domain region; the sequence is MDSLNDPPCT…QGPLHFVGLL (69 aa).

This sequence in the N-terminal section; belongs to the ferrochelatase family. The protein in the C-terminal section; belongs to the Hlip family.

Its subcellular location is the cytoplasm. The catalysed reaction is heme b + 2 H(+) = protoporphyrin IX + Fe(2+). Its pathway is porphyrin-containing compound metabolism; protoheme biosynthesis; protoheme from protoporphyrin-IX: step 1/1. In terms of biological role, catalyzes the ferrous insertion into protoporphyrin IX. Functionally, the Hlip proteins might regulate tetrapyrrole biosynthesis, maybe at the level of aminolevulinic acid synthesis. Deletion of 4 to 5 members of the Hlip family (always including this member) suggests the proteins are involved in regulation of chlorophyll biosynthesis, in stabilization of chlorophyll-binding proteins and/or in reuse of chlorophylls, and may regulate tetrapyrrole biosynthesis. The Hlip proteins probably stabilize PSII assembly intermediates. The chain is Ferrochelatase from Synechocystis sp. (strain ATCC 27184 / PCC 6803 / Kazusa).